The primary structure comprises 146 residues: VHLTGEEKSGLTALWAKVNVEEIGGEALGRLLVVYPWTQRFFEHFGDLSTADAVMKNPKVKKHGQKVLASFGEGLKHLDNLKGTFATLSELHCDKLHVDPENFRLLGNVLVVVLARHFGKEFTPELQTAYQKVVAGVANALAHKYH.

Valine 1 carries the N-acetylvaline modification. The Globin domain maps to 2 to 146 (HLTGEEKSGL…VANALAHKYH (145 aa)). The residue at position 12 (threonine 12) is a Phosphothreonine. N6-acetyllysine is present on lysine 59. Histidine 63 is a heme b binding site. Lysine 82 is modified (N6-acetyllysine). Histidine 92 is a heme b binding site. Cysteine 93 carries the S-nitrosocysteine modification. An N6-acetyllysine modification is found at lysine 144.

Belongs to the globin family. In terms of assembly, heterotetramer of two alpha chains and two beta chains. In terms of tissue distribution, red blood cells.

Involved in oxygen transport from the lung to the various peripheral tissues. The polypeptide is Hemoglobin subunit beta-1/2 (HBB) (Physeter macrocephalus (Sperm whale)).